We begin with the raw amino-acid sequence, 140 residues long: Large ribosomal subunit protein uL11 (140 aa).

Belongs to the universal ribosomal protein uL11 family. Part of the ribosomal stalk of the 50S ribosomal subunit. Interacts with L10 and the large rRNA to form the base of the stalk. L10 forms an elongated spine to which L12 dimers bind in a sequential fashion forming a multimeric L10(L12)X complex. Post-translationally, one or more lysine residues are methylated.

In terms of biological role, forms part of the ribosomal stalk which helps the ribosome interact with GTP-bound translation factors. This chain is Large ribosomal subunit protein uL11, found in Solidesulfovibrio magneticus (strain ATCC 700980 / DSM 13731 / RS-1) (Desulfovibrio magneticus).